The chain runs to 430 residues: Enolase (430 aa).

Residue Gln163 coordinates (2R)-2-phosphoglycerate. Glu205 (proton donor) is an active-site residue. Residues Asp242, Glu287, and Asp314 each coordinate Mg(2+). (2R)-2-phosphoglycerate-binding residues include Lys339, Arg368, Ser369, and Lys390. Catalysis depends on Lys339, which acts as the Proton acceptor.

It belongs to the enolase family. Requires Mg(2+) as cofactor.

It localises to the cytoplasm. The protein localises to the secreted. The protein resides in the cell surface. It catalyses the reaction (2R)-2-phosphoglycerate = phosphoenolpyruvate + H2O. It participates in carbohydrate degradation; glycolysis; pyruvate from D-glyceraldehyde 3-phosphate: step 4/5. In terms of biological role, catalyzes the reversible conversion of 2-phosphoglycerate (2-PG) into phosphoenolpyruvate (PEP). It is essential for the degradation of carbohydrates via glycolysis. The chain is Enolase from Bacillus licheniformis (strain ATCC 14580 / DSM 13 / JCM 2505 / CCUG 7422 / NBRC 12200 / NCIMB 9375 / NCTC 10341 / NRRL NRS-1264 / Gibson 46).